The primary structure comprises 54 residues: Large ribosomal subunit protein bL32 (54 aa).

It belongs to the bacterial ribosomal protein bL32 family.

The chain is Large ribosomal subunit protein bL32 from Buchnera aphidicola subsp. Baizongia pistaciae (strain Bp).